Here is a 368-residue protein sequence, read N- to C-terminus: tRNA-specific 2-thiouridylase MnmA (368 aa).

ATP-binding positions include alanine 12–serine 19 and methionine 38. Positions asparagine 98–aspartate 100 are interaction with target base in tRNA. Cysteine 103 serves as the catalytic Nucleophile. A disulfide bond links cysteine 103 and cysteine 200. Glycine 128 provides a ligand contact to ATP. An interaction with tRNA region spans residues lysine 150–glutamine 152. Catalysis depends on cysteine 200, which acts as the Cysteine persulfide intermediate. The segment at arginine 312–tyrosine 313 is interaction with tRNA.

This sequence belongs to the MnmA/TRMU family. In terms of assembly, interacts with TusE.

The protein localises to the cytoplasm. The enzyme catalyses S-sulfanyl-L-cysteinyl-[protein] + uridine(34) in tRNA + AH2 + ATP = 2-thiouridine(34) in tRNA + L-cysteinyl-[protein] + A + AMP + diphosphate + H(+). Functionally, catalyzes the 2-thiolation of uridine at the wobble position (U34) of tRNA(Lys), tRNA(Glu) and tRNA(Gln), leading to the formation of s(2)U34, the first step of tRNA-mnm(5)s(2)U34 synthesis. Sulfur is provided by IscS, via a sulfur-relay system. Binds ATP and its substrate tRNAs. This Buchnera aphidicola subsp. Acyrthosiphon pisum (strain APS) (Acyrthosiphon pisum symbiotic bacterium) protein is tRNA-specific 2-thiouridylase MnmA.